A 371-amino-acid polypeptide reads, in one-letter code: ETS-related transcription factor Elf-3 (371 aa).

The 87-residue stretch at 46 to 132 (NPQMSLEGTE…AQLRDLTSSS (87 aa)) folds into the PNT domain. A 9aaTAD motif is present at residues 137–145 (SWIIELLEK). The segment at 173 to 251 (GQQASPYHPG…HGKRKRGRPR (79 aa)) is disordered. Over residues 181–216 (PGSCGAGAPSPGSSDVSTAGTGASRSSHSSDSGGSD) the composition is skewed to low complexity. Over residues 231–241 (GFRDCKKGDPK) the composition is skewed to basic and acidic residues. The segment covering 242 to 251 (HGKRKRGRPR) has biased composition (basic residues). A DNA-binding region (ETS) is located at residues 273–355 (THLWEFIRDI…DGRRLVYKFG (83 aa)).

It belongs to the ETS family. As to quaternary structure, interacts with TBP. Interacts with CREBBP and EP300; these act as transcriptional coactivators of ELF3 and positively modulate its function. Interacts with XRCC5/KU86 and XRCC6/KU70; these inhibit the ability of ELF3 to bind DNA and negatively modulate its transcriptional activity. Associated with CLND7 and POU2F3. Interacts with ZNF768. As to expression, expressed exclusively in tissues containing a high content of terminally differentiated epithelial cells including mammary gland, colon, trachea, kidney, prostate, uterus, stomach and skin.

It is found in the cytoplasm. Its subcellular location is the nucleus. In terms of biological role, transcriptional activator that binds and transactivates ETS sequences containing the consensus nucleotide core sequence GGA[AT]. Acts synergistically with POU2F3 to transactivate the SPRR2A promoter and with RUNX1 to transactivate the ANGPT1 promoter. Also transactivates collagenase, CCL20, CLND7, FLG, KRT8, NOS2, PTGS2, SPRR2B, TGFBR2 and TGM3 promoters. Represses KRT4 promoter activity. Involved in mediating vascular inflammation. May play an important role in epithelial cell differentiation and tumorigenesis. May be a critical downstream effector of the ERBB2 signaling pathway. May be associated with mammary gland development and involution. Plays an important role in the regulation of transcription with TATA-less promoters in preimplantation embryos, which is essential in preimplantation development. The polypeptide is ETS-related transcription factor Elf-3 (Homo sapiens (Human)).